The following is a 191-amino-acid chain: Protein Ves (191 aa).

Belongs to the Ves family.

This chain is Protein Ves, found in Escherichia coli O8 (strain IAI1).